We begin with the raw amino-acid sequence, 233 residues long: Small ribosomal subunit protein uS2c (233 aa).

The protein belongs to the universal ribosomal protein uS2 family.

The protein localises to the plastid. It localises to the chloroplast. In Galdieria sulphuraria (Red alga), this protein is Small ribosomal subunit protein uS2c (rps2).